We begin with the raw amino-acid sequence, 956 residues long: DNA replication helicase (956 aa).

Position 120-127 (Gly120–Thr127) interacts with ATP. Residues Pro658–Ser694 form a disordered region. Low complexity predominate over residues Ser667–Gln678. Basic and acidic residues predominate over residues Arg679 to Ser694.

This sequence belongs to the herpesviridae helicase family. In terms of assembly, associates with the primase and the primase-associated factor to form the helicase-primase complex.

It is found in the host nucleus. In terms of biological role, component of the helicase/primase complex. Unwinds the DNA at the replication forks and generates single-stranded DNA for both leading and lagging strand synthesis. The primase synthesizes short RNA primers on the lagging strand that the polymerase elongates using dNTPs. Possesses helicase-like motifs and therefore may act as the helicase subunit of the complex. The polypeptide is DNA replication helicase (Human cytomegalovirus (strain AD169) (HHV-5)).